Consider the following 337-residue polypeptide: Cytochrome P450 monooxygenase dpmpJ (337 aa).

Residues 4-24 form a helical membrane-spanning segment; sequence LILHHPYASLAAGILLYFFCL. N158 is a glycosylation site (N-linked (GlcNAc...) asparagine).

The protein belongs to the cytochrome P450 family. Requires heme as cofactor.

It is found in the membrane. Its pathway is secondary metabolite biosynthesis; terpenoid biosynthesis. Its function is as follows. Cytochrome P450 monooxygenase; part of the gene cluster that mediates the biosynthesis of diterpenoid pyrones. The first step of the pathway is the synthesis of the alpha-pyrone moiety by the polyketide synthase dpmpA via condensation of one acetyl-CoA starter unit with 3 malonyl-CoA units and 2 methylations. The alpha-pyrone is then combined with geranylgeranyl pyrophosphate (GGPP) formed by the GGPP synthase dpmpD through the action of the prenyltransferase dpmpC to yield a linear alpha-pyrone diterpenoid. Subsequent steps in the diterpenoid pyrone biosynthetic pathway involve the decalin core formation, which is initiated by the epoxidation of the C10-C11 olefin by the FAD-dependent oxidoreductase dpmpE, and is followed by a cyclization cascade catalyzed by the terpene cyclase dpmpB. The short chain dehydrogenase/reductase dpmpG then oxidizes the 8S hydroxy group to a ketone and the short chain dehydrogenase/reductase dpmpH reduces the ketone to the 8R hydroxy group to yield higginsianin B. Higginsianin B is further methylated by the methyltransferase dpmpI to produce the intermediate named FDDP B. The cytochrome P450 monooxygenase dpmpJ then oxidizes the C-26 methyl to primary alcohol, producing the final diterpenoid pyrone with a C-26 primary alcohol on the gamma-pyrone moiety named FDDP C. The polypeptide is Cytochrome P450 monooxygenase dpmpJ (Macrophomina phaseolina (strain MS6) (Charcoal rot fungus)).